The sequence spans 641 residues: Fructose-1,6-bisphosphatase class 3 (641 aa).

This sequence belongs to the FBPase class 3 family. It depends on Mn(2+) as a cofactor.

The enzyme catalyses beta-D-fructose 1,6-bisphosphate + H2O = beta-D-fructose 6-phosphate + phosphate. The protein operates within carbohydrate biosynthesis; gluconeogenesis. The chain is Fructose-1,6-bisphosphatase class 3 from Ligilactobacillus salivarius (strain UCC118) (Lactobacillus salivarius).